Consider the following 1199-residue polypeptide: DNA polymerase beta (1199 aa).

Belongs to the DNA polymerase type-B family.

The catalysed reaction is DNA(n) + a 2'-deoxyribonucleoside 5'-triphosphate = DNA(n+1) + diphosphate. Functionally, DNA-directed DNA polymerase involved in viral DNA replication. This chain is DNA polymerase beta, found in Ornithodoros (relapsing fever ticks).